The sequence spans 541 residues: Kinesin light chain 1 (541 aa).

The stretch at 27-156 forms a coiled coil; the sequence is KTKQVIQGLE…HLEFMNQLKK (130 aa). Residues 156 to 176 show a composition bias toward basic and acidic residues; it reads KYDDDISPSEDKDSDSSKEPL. Positions 156 to 201 are disordered; the sequence is KYDDDISPSEDKDSDSSKEPLDDLFPNDEDEPGQGIQHSDSSAAAA. The residue at position 162 (Ser162) is a Phosphoserine. TPR repeat units lie at residues 211–244, 253–286, 295–328, 337–370, and 380–413; these read LRTL…LEKT, ATML…REKT, AATL…REKV, AKQL…YQTK, and AKTK…AHEA. Tyr448 is subject to Phosphotyrosine. Ser459 carries the post-translational modification Phosphoserine. One copy of the TPR 6 repeat lies at 463-496; it reads TTTLKNLGALYRRQGKFEAAETLEEAAMRSRKQG. A disordered region spans residues 493-541; that stretch reads RKQGLDNVHKQRVAEVLNDPESMEKRRSRESLNMDVVKYESGPDGGEEA. 2 stretches are compositionally biased toward basic and acidic residues: residues 495–505 and 514–524; these read QGLDNVHKQRV and SMEKRRSRESL. Ser520 and Ser523 each carry phosphoserine; by AMPK.

The protein belongs to the kinesin light chain family. Oligomeric complex composed of two heavy chains and two light chains. Interacts with SPAG9. Interacts with ATCAY; may link mitochondria to KLC1 and regulate mitochondria localization into neuron projections. Interacts (via TPR repeats) with TOR1A; the interaction associates TOR1A with the kinesin oligomeric complex. Interacts with BORCS5. Interacts with MAPK8IP3/JIP3 and NTRK2/TRKB; interaction with NTRK2/TRKB is mediated by MAPK8IP3/JIP3. Interacts with CLSTN1; phosphorylation at Ser-459 inhibits interaction with CLSTN1. Phosphorylation at Ser-459 by ERK inhibits interaction with CLSTN1 and localization to cytoplasmic vesicles.

The protein localises to the cell projection. It is found in the growth cone. The protein resides in the cytoplasmic vesicle. It localises to the cytoplasm. Its subcellular location is the cytoskeleton. Its function is as follows. Kinesin is a microtubule-associated force-producing protein that may play a role in organelle transport. The light chain may function in coupling of cargo to the heavy chain or in the modulation of its ATPase activity. This chain is Kinesin light chain 1 (Klc1), found in Mus musculus (Mouse).